The sequence spans 295 residues: Deleted in azoospermia-like (295 aa).

The span at 1–10 (MSAANPETPN) shows a compositional bias: polar residues. The tract at residues 1–25 (MSAANPETPNSTISREASTQSSSAA) is disordered. The segment covering 11–25 (STISREASTQSSSAA) has biased composition (low complexity). In terms of domain architecture, RRM spans 40 to 115 (NTVFVGGIDV…KKLKLGPAIR (76 aa)). The interval 80-132 (KGYGFVSFFNDVDVQKIVESQINFHGKKLKLGPAIRKQNLCAYHVQPRPLVFN) is homodimerization. The 24-residue stretch at 167–190 (AYPTYPNSPVQVITGYQLPVYNYQ) folds into the DAZ domain. Tyr-276 is modified (phosphotyrosine).

Belongs to the RRM DAZ family. Homodimer and heterodimer. Forms a heterodimer with DAZ. Interacts with BOLL, DAZAP1 and DAZAP2. Interacts with PUM2 Multiple DAZL RRMs can bind to a single RNA containing multiple GUU triplets. In terms of tissue distribution, testis specific.

Its subcellular location is the cytoplasm. It is found in the nucleus. RNA-binding protein, which is essential for gametogenesis in both males and females. Plays a central role during spermatogenesis. Acts by binding to the 3'-UTR of mRNA, specifically recognizing GUU triplets, and thereby regulating the translation of key transcripts. This is Deleted in azoospermia-like (DAZL) from Macaca fascicularis (Crab-eating macaque).